The sequence spans 573 residues: Probable pectinesterase/pectinesterase inhibitor 41 (573 aa).

The first 22 residues, 1 to 22 (MLSLKLFLVTLFLSLQTLFIAS), serve as a signal peptide directing secretion. The interval 25–184 (LLPSNSSSTI…TKLFSVSLAL (160 aa)) is pectinesterase inhibitor 41. 7 N-linked (GlcNAc...) asparagine glycosylation sites follow: asparagine 29, asparagine 119, asparagine 173, asparagine 264, asparagine 268, asparagine 281, and asparagine 320. The pectinesterase 41 stretch occupies residues 259-557 (VTVNQNGTGN…FTVENFLLGD (299 aa)). A substrate-binding site is contributed by threonine 336. N-linked (GlcNAc...) asparagine glycosylation occurs at asparagine 353. Position 366 (glutamine 366) interacts with substrate. Residue aspartate 389 is the Proton donor; for pectinesterase activity of the active site. Cysteine 403 and cysteine 423 are disulfide-bonded. Aspartate 410 acts as the Nucleophile; for pectinesterase activity in catalysis. Residues asparagine 456 and asparagine 469 are each glycosylated (N-linked (GlcNAc...) asparagine). Substrate contacts are provided by arginine 478 and tryptophan 480. Asparagine 520, asparagine 541, and asparagine 547 each carry an N-linked (GlcNAc...) asparagine glycan.

It in the N-terminal section; belongs to the PMEI family. The protein in the C-terminal section; belongs to the pectinesterase family. As to expression, expressed in flowers, siliques, floral stems and rosettes leaves.

It is found in the secreted. It localises to the cell wall. It catalyses the reaction [(1-&gt;4)-alpha-D-galacturonosyl methyl ester](n) + n H2O = [(1-&gt;4)-alpha-D-galacturonosyl](n) + n methanol + n H(+). Its pathway is glycan metabolism; pectin degradation; 2-dehydro-3-deoxy-D-gluconate from pectin: step 1/5. Acts in the modification of cell walls via demethylesterification of cell wall pectin. The protein is Probable pectinesterase/pectinesterase inhibitor 41 (PME41) of Arabidopsis thaliana (Mouse-ear cress).